The primary structure comprises 465 residues: MGMDYTPRQIVEQLDQFIVGQKQAKKSVAVALRNRYRRMKLDEGFRDEIVPKNILMIGPTGVGKTEIARRLAKLVGAPFIKVEATKFTEVGYVGRDVESMVRDLVEMAVRMVKEEKMAGVMNEAEEEANKRLVKLLVPESKKKPAMKNPFEMLFQSDGSDGDDETTEQDSHDEIRSKRKRIAHQLALGELEDHIVSVEIDEVPPSMFDMLQGSGMEQMGMNMQDAFGQFMPKKKKKRNLPVSEARKVLTQQEAQKLVDMDEVAQEATSRAEGSGIIFIDEIDKVAGKQENAANVSREGVQRDILPIVEGSTVVTKHGTVKTDHMLFVAAGAFHMSKPSDLIPELQGRFPIRVELEKLTVEDFKRILTEPSNALIKQYQLMLQTEGINVEFTDEAIERLAEIAYQVNQNTDNIGARRLHTILEKLLEDLSYEAPEITMEKVEITVGYVDDKLSSIVQDKDLSQFIL.

ATP is bound by residues valine 19 and 61–66; that span reads GVGKTE. The interval 153–175 is disordered; sequence LFQSDGSDGDDETTEQDSHDEIR. Aspartate 279, glutamate 343, and arginine 415 together coordinate ATP.

Belongs to the ClpX chaperone family. HslU subfamily. As to quaternary structure, a double ring-shaped homohexamer of HslV is capped on each side by a ring-shaped HslU homohexamer. The assembly of the HslU/HslV complex is dependent on binding of ATP.

The protein resides in the cytoplasm. Its function is as follows. ATPase subunit of a proteasome-like degradation complex; this subunit has chaperone activity. The binding of ATP and its subsequent hydrolysis by HslU are essential for unfolding of protein substrates subsequently hydrolyzed by HslV. HslU recognizes the N-terminal part of its protein substrates and unfolds these before they are guided to HslV for hydrolysis. This Oceanobacillus iheyensis (strain DSM 14371 / CIP 107618 / JCM 11309 / KCTC 3954 / HTE831) protein is ATP-dependent protease ATPase subunit HslU.